The following is a 309-amino-acid chain: Gamma-hemolysin component A (309 aa).

The N-terminal stretch at 1–29 (MIKNKILTATLAVGLIAPLANPFIEISKA) is a signal peptide.

This sequence belongs to the aerolysin family. Toxicity requires sequential binding and synergistic association of a class S and a class F component which form heterooligomeric complexes. HlgA (class S) associates with HlgB (class F) thus forming an AB toxin in strains producing both gamma-hemolysins and leukocidins. HlgA and LukF-PV can also form a complex.

The protein localises to the secreted. Toxin that seems to act by forming pores in the membrane of the cell. Has a hemolytic and a leucotoxic activity. The chain is Gamma-hemolysin component A (hlgA) from Staphylococcus aureus (strain COL).